Here is a 358-residue protein sequence, read N- to C-terminus: Alanine racemase (358 aa).

Lysine 35 acts as the Proton acceptor; specific for D-alanine in catalysis. At lysine 35 the chain carries N6-(pyridoxal phosphate)lysine. Residue arginine 130 participates in substrate binding. Tyrosine 255 acts as the Proton acceptor; specific for L-alanine in catalysis. Methionine 303 provides a ligand contact to substrate.

It belongs to the alanine racemase family. Pyridoxal 5'-phosphate is required as a cofactor.

It catalyses the reaction L-alanine = D-alanine. It functions in the pathway amino-acid biosynthesis; D-alanine biosynthesis; D-alanine from L-alanine: step 1/1. Catalyzes the interconversion of L-alanine and D-alanine. May also act on other amino acids. This chain is Alanine racemase (alr), found in Shewanella piezotolerans (strain WP3 / JCM 13877).